We begin with the raw amino-acid sequence, 392 residues long: LL-diaminopimelate aminotransferase (392 aa).

Residues Tyr-13 and Gly-38 each coordinate substrate. Pyridoxal 5'-phosphate-binding positions include Tyr-67, 102–103 (SK), Tyr-127, Asn-177, Tyr-208, and 236–238 (SCS). Positions 103, 127, and 177 each coordinate substrate. Residue Lys-239 is modified to N6-(pyridoxal phosphate)lysine. Arg-247 contacts pyridoxal 5'-phosphate. Position 366 (Arg-366) interacts with substrate.

This sequence belongs to the class-I pyridoxal-phosphate-dependent aminotransferase family. LL-diaminopimelate aminotransferase subfamily. In terms of assembly, homodimer. Pyridoxal 5'-phosphate is required as a cofactor.

The catalysed reaction is (2S,6S)-2,6-diaminopimelate + 2-oxoglutarate = (S)-2,3,4,5-tetrahydrodipicolinate + L-glutamate + H2O + H(+). It functions in the pathway amino-acid biosynthesis; L-lysine biosynthesis via DAP pathway; LL-2,6-diaminopimelate from (S)-tetrahydrodipicolinate (aminotransferase route): step 1/1. Its function is as follows. Involved in the synthesis of meso-diaminopimelate (m-DAP or DL-DAP), required for both lysine and peptidoglycan biosynthesis. Catalyzes the direct conversion of tetrahydrodipicolinate to LL-diaminopimelate. Can also use m-DAP instead of LL-DAP as the amino-group donor. In Gloeobacter violaceus (strain ATCC 29082 / PCC 7421), this protein is LL-diaminopimelate aminotransferase.